The sequence spans 180 residues: MKQLLDFLPLVVFFVCYKLYDIYVASGALVAATAVALVLTWLKYRRVEKMTLITFIMVAIFGTLTLVFHNDLFIKWKVTVIYTLFALALLISQVVLKKPLIQRMLGKELQLPDSVWSRLNAAWALFFLGCGLANIYVAFWLPQSVWVDFKVFGLTALTLVFTLLSGIYIYRNMSEEQKHS.

Transmembrane regions (helical) follow at residues Ile-22–Leu-42, Met-50–Asn-70, Trp-76–Leu-96, Ala-121–Leu-141, and Phe-149–Ile-169.

The protein belongs to the YciB family.

Its subcellular location is the cell inner membrane. In terms of biological role, plays a role in cell envelope biogenesis, maintenance of cell envelope integrity and membrane homeostasis. This chain is Inner membrane-spanning protein YciB, found in Edwardsiella ictaluri (strain 93-146).